The sequence spans 319 residues: Homoserine dehydrogenase (319 aa).

Positions 10, 12, 13, 40, 57, 92, 93, 114, and 116 each coordinate NADPH. Val-13 contacts NAD(+). 2 residues coordinate NADP(+): Val-13 and Arg-40. Ser-92 is a binding site for NAD(+). Ser-92 is an NADP(+) binding site. Ser-114 and Lys-116 together coordinate NADP(+). Na(+) is bound by residues Glu-140, Val-143, Ala-145, and Thr-147. The NADP(+) site is built by Gly-197 and Glu-200. Residues Glu-200 and Asp-211 each coordinate L-homoserine. Residue Lys-215 is the Proton donor of the active site. Gly-296 is an NADPH binding site. Residue Gly-296 participates in NAD(+) binding. Gly-296 is a binding site for NADP(+).

This sequence belongs to the homoserine dehydrogenase family. Homodimer. A metal cation is required as a cofactor.

It catalyses the reaction L-homoserine + NAD(+) = L-aspartate 4-semialdehyde + NADH + H(+). It participates in amino-acid biosynthesis; L-methionine biosynthesis via de novo pathway; L-homoserine from L-aspartate: step 3/3. Its pathway is amino-acid biosynthesis; L-threonine biosynthesis; L-threonine from L-aspartate: step 3/5. Catalyzes the conversion of L-aspartate-beta-semialdehyde (L-Asa) to L-homoserine (L-Hse), the third step in the biosynthesis of threonine and methionine from aspartate. Utilizes NADH but not NADPH as coenzyme. The chain is Homoserine dehydrogenase from Pyrococcus horikoshii (strain ATCC 700860 / DSM 12428 / JCM 9974 / NBRC 100139 / OT-3).